Consider the following 112-residue polypeptide: Nucleoid-associated protein lpg2755 (112 aa).

This sequence belongs to the YbaB/EbfC family. Homodimer.

It localises to the cytoplasm. It is found in the nucleoid. Binds to DNA and alters its conformation. May be involved in regulation of gene expression, nucleoid organization and DNA protection. The protein is Nucleoid-associated protein lpg2755 of Legionella pneumophila subsp. pneumophila (strain Philadelphia 1 / ATCC 33152 / DSM 7513).